A 617-amino-acid polypeptide reads, in one-letter code: Lipoteichoic acid synthase-like YvgJ (617 aa).

The Cytoplasmic segment spans residues 1–10; that stretch reads MKGTFFHNQR. The helical transmembrane segment at 11–31 threads the bilayer; that stretch reads FLCFSILFMWIKTYVIYKLGF. The Extracellular segment spans residues 32 to 41; sequence DLQIDTLLEE. The chain crosses the membrane as a helical span at residues 42–62; the sequence is LMLLVNPLSFILPLFGIGLFL. The Cytoplasmic segment spans residues 63–68; the sequence is KENKQR. The helical transmembrane segment at 69–89 threads the bilayer; that stretch reads AFLLIANLVLTVILISNTIFY. The Extracellular portion of the chain corresponds to 90-115; that stretch reads GFYIDFITIPVLFQASNMSDMGSSVK. Residues 116–136 form a helical membrane-spanning segment; that stretch reads ELFHPLFIALFVDLVFLLLFA. Over 137–153 the chain is Cytoplasmic; it reads RKTKHPQTKAAPHTIKR. The chain crosses the membrane as a helical span at residues 154-171; sequence YYAASCGMLLCTLALAEV. Topologically, residues 172 to 617 are extracellular; it reads QQPKLLAHSF…LNGDLLRFSE (446 aa). Mn(2+)-binding residues include E251 and T293. The active site involves T293. H408 is a binding site for substrate. Mn(2+)-binding residues include D467 and H468.

The protein belongs to the LTA synthase family. Proteolytically cleaved.

The protein localises to the cell membrane. It is found in the secreted. In Bacillus subtilis (strain 168), this protein is Lipoteichoic acid synthase-like YvgJ (yvgJ).